The following is a 1201-amino-acid chain: Vitamin B12-dependent ribonucleotide reductase (1201 aa).

Substrate-binding positions include S153, 198-199 (AC), G230, 482-486 (NPCSE), and 683-687 (PTGTI). C199 and C495 form a disulfide bridge. The Proton acceptor role is filled by N482. C484 serves as the catalytic Cysteine radical intermediate. Residue E486 is the Proton acceptor of the active site. Residues 1100–1118 (DEIGSKRATAESNGQEKET) show a composition bias toward basic and acidic residues. The disordered stretch occupies residues 1100 to 1120 (DEIGSKRATAESNGQEKETLS).

It belongs to the ribonucleoside diphosphate reductase class-2 family. It depends on adenosylcob(III)alamin as a cofactor.

It catalyses the reaction a 2'-deoxyribonucleoside 5'-diphosphate + [thioredoxin]-disulfide + H2O = a ribonucleoside 5'-diphosphate + [thioredoxin]-dithiol. Its function is as follows. Catalyzes the reduction of ribonucleotides to deoxyribonucleotides. May function to provide a pool of deoxyribonucleotide precursors for DNA repair during oxygen limitation and/or for immediate growth after restoration of oxygen. The polypeptide is Vitamin B12-dependent ribonucleotide reductase (nrdJ) (Leptospira interrogans serogroup Icterohaemorrhagiae serovar copenhageni (strain Fiocruz L1-130)).